The following is an 830-amino-acid chain: MGKNRRKQKVIPPPLLPPDVAEEDIEFSDEDLKYVKENTDYAQFVSQIDTAAINKQCGGRVMTVEDKYEEERSKRKTLQEEKGNGEILVDPVDVLPVKTLDGKLHYRTESKKSKLAEAETDEAEKDVLEDEHVLNKSQRREKAKKSKREAKKHEKDLPDEILQEEEETPQAAVLAEVKEELSAEESFENKKNKIAELGMLLLSDPEANIKTLKDMLDICKDQNTKIVKLALLSLLAVFKDIIPGYRIRLPTEKELEMKISKEVKKTRFYESTLLKAYKSYLQKLIIFEKQSVYNQIANRCLCTLLEAVPHFNYRDNLLIAVVRNISSPDEVVRRLCCSTIRYLFSNEGKHGGELTVQAVRLIADHVKAHNCQLHPNAIEVFMSIRFDEDIGKPNKEDEHNKKYKKNNKRKTQEEQNQVQENERKKSKKDMMSKIRDEVSADHRGVTYEPDAKERRKMQTETLSAVFETYFRILRNTMYTIGERTEEIPTSNPGAFGSHPLLAPCLDGLAKFTQQLDLDYMGDLMNYLKKLASSSSSVSNNTKQKNSKLLTVSERLRCCLVAFKVMRSNLNALNVDLQDFFVQLYNLILEYRPGRDSGVILAESLKIMLCDDRHQDMQKAAAFVKRLATFALCFGCAESMSALVTLKTLLQKNVKCRNLLENDAGGGSVSGSIAKYQPYATDPNLSGALATVLWELSLLSKHYHPAISTMATTVSNMNTSQSQTFLSAVTPQQAFADFSLVKESFEPKNESRKLNNKRKRESLPEEAKNVPEIDMVKLSKKLKENFTILRDIKEDERVRMELLQSEEKKPLKKQNNVVKKKLKNPKSKKQI.

Disordered stretches follow at residues Met-1 to Glu-22, Lys-67 to Glu-86, Lys-112 to Pro-169, Gly-391 to Asp-436, and Leu-802 to Ile-830. 2 coiled-coil regions span residues Val-61–Glu-81 and Lys-111–Asp-156. Positions Lys-67–Asn-84 are enriched in basic and acidic residues. A compositionally biased stretch (acidic residues) spans Ala-118–Glu-129. The span at Asp-130 to Arg-140 shows a compositional bias: basic and acidic residues. The Nuclear localization signal 1 signature appears at Gln-138–Lys-145. Residues Glu-141–Ala-150 show a composition bias toward basic residues. Residues Asp-159–Thr-168 are compositionally biased toward acidic residues. The span at Gly-391–Asn-400 shows a compositional bias: basic and acidic residues. Positions Asn-400–Asp-429 form a coiled coil. Positions Lys-408–Gln-415 match the Nuclear localization signal 2 motif. Over residues Glu-420–Asp-436 the composition is skewed to basic and acidic residues. Positions Glu-806–Gln-813 match the Nuclear localization signal 3 motif. The segment covering Val-817–Ile-830 has biased composition (basic residues).

Belongs to the CBF/MAK21 family. As to quaternary structure, component of nucleolar complexes. Interacts with RBL and NOC2 in both the nucleolus and nucleoplasm.

It localises to the nucleus. Its subcellular location is the nucleolus. The protein localises to the nucleoplasm. Functionally, may be required for synthesis of 60S ribosomal subunits and the transport of pre-ribosomes from the nucleoplasm to the cytoplasm. Also required for initiation of DNA replication. This is Nucleolar complex-associated protein 3 from Arabidopsis thaliana (Mouse-ear cress).